The following is a 66-amino-acid chain: Beta-toxin Cbo1 (66 aa).

The LCN-type CS-alpha/beta domain maps to 1 to 66; that stretch reads KEGYLVNHST…VWPLPKKTCN (66 aa). 4 disulfides stabilise this stretch: Cys12–Cys65, Cys16–Cys41, Cys25–Cys46, and Cys29–Cys48. Residue Asn66 is modified to Asparagine amide.

This sequence belongs to the long (4 C-C) scorpion toxin superfamily. Sodium channel inhibitor family. Beta subfamily. Expressed by the venom gland.

Its subcellular location is the secreted. Functionally, beta toxins bind voltage-independently at site-4 of sodium channels and shift the voltage of activation toward more negative potentials thereby affecting sodium channel activation and promoting spontaneous and repetitive firing. Is active on the human voltage-gated sodium channel Nav1.6/SCN8A when tested at 200 nM. In vivo, is toxic to mice when intraperitoneally injected. The sequence is that of Beta-toxin Cbo1 from Centruroides bonito (Scorpion).